Here is a 207-residue protein sequence, read N- to C-terminus: LexA repressor (207 aa).

A DNA-binding region (H-T-H motif) is located at residues 28–48; sequence RAEIASRLGFKSANAAEEHLK. Residues S124 and K161 each act as for autocatalytic cleavage activity in the active site.

Belongs to the peptidase S24 family. In terms of assembly, homodimer.

It catalyses the reaction Hydrolysis of Ala-|-Gly bond in repressor LexA.. Functionally, represses a number of genes involved in the response to DNA damage (SOS response), including recA and lexA. In the presence of single-stranded DNA, RecA interacts with LexA causing an autocatalytic cleavage which disrupts the DNA-binding part of LexA, leading to derepression of the SOS regulon and eventually DNA repair. In Shewanella amazonensis (strain ATCC BAA-1098 / SB2B), this protein is LexA repressor.